The following is a 412-amino-acid chain: 46 kDa FK506-binding nuclear protein (412 aa).

Composition is skewed to acidic residues over residues 95–113 (EEDL…EEEA), 169–178 (GEDIDTDEND), and 188–216 (EGDD…EEEE). A disordered region spans residues 95-304 (EEDLEDEEEA…PVEKKEKKQI (210 aa)). Residues 247–257 (KSQKRRLKKKL) are compositionally biased toward basic residues. Basic and acidic residues predominate over residues 271–303 (DKPKKEEPQQKAEKKKPEAKKEEAPVEKKEKKQ). Residues 324 to 412 (GKVVMVYYEG…VFEVDLKNVK (89 aa)) form the PPIase FKBP-type domain.

The protein belongs to the FKBP-type PPIase family. Post-translationally, phosphorylated by a nuclear kinase in the presence of Mg(2+) and ATP.

The protein localises to the nucleus. The enzyme catalyses [protein]-peptidylproline (omega=180) = [protein]-peptidylproline (omega=0). Inhibited by both FK506 and rapamycin. Its function is as follows. PPIases accelerate the folding of proteins. It catalyzes the cis-trans isomerization of proline imidic peptide bonds in oligopeptides. Binds double-stranded DNA in vitro. The sequence is that of 46 kDa FK506-binding nuclear protein (FKBP46) from Spodoptera frugiperda (Fall armyworm).